Reading from the N-terminus, the 290-residue chain is Porphobilinogen deaminase (290 aa).

C237 carries the post-translational modification S-(dipyrrolylmethanemethyl)cysteine.

This sequence belongs to the HMBS family. As to quaternary structure, monomer. Requires dipyrromethane as cofactor.

The catalysed reaction is 4 porphobilinogen + H2O = hydroxymethylbilane + 4 NH4(+). It participates in porphyrin-containing compound metabolism; protoporphyrin-IX biosynthesis; coproporphyrinogen-III from 5-aminolevulinate: step 2/4. Functionally, tetrapolymerization of the monopyrrole PBG into the hydroxymethylbilane pre-uroporphyrinogen in several discrete steps. The protein is Porphobilinogen deaminase of Clostridium botulinum (strain Loch Maree / Type A3).